Here is a 729-residue protein sequence, read N- to C-terminus: Disintegrin and metalloproteinase domain-containing protein 21 (729 aa).

The signal sequence occupies residues 1 to 39 (MECFIMLGADARTLMRVTLLLLWLKALPSLIDLSQTGST). The propeptide occupies 40–209 (QYLSSPEVVI…MKQNYGKLWP (170 aa)). Asn-169 is a glycosylation site (N-linked (GlcNAc...) asparagine). Residues 176–183 (MLCSLTEK) carry the Cysteine switch motif. Residue Cys-178 coordinates Zn(2+). Residues 210-685 (HMWFLELAVV…DSGPTSQKRR (476 aa)) lie on the Extracellular side of the membrane. A Peptidase M12B domain is found at 212–402 (WFLELAVVVD…NQGTCLYNHP (191 aa)). A glycan (N-linked (GlcNAc...) asparagine) is linked at Asn-231. 3 cysteine pairs are disulfide-bonded: Cys-320–Cys-397, Cys-360–Cys-382, and Cys-362–Cys-367. His-345 contributes to the Zn(2+) binding site. Glu-346 is a catalytic residue. His-349 and His-355 together coordinate Zn(2+). 3 N-linked (GlcNAc...) asparagine glycosylation sites follow: Asn-381, Asn-441, and Asn-482. The region spanning 410–496 (VKRCGNGMVE…QCPEDGYVQD (87 aa)) is the Disintegrin domain. 4 disulfide bridges follow: Cys-468/Cys-488, Cys-638/Cys-649, Cys-643/Cys-655, and Cys-657/Cys-666. In terms of domain architecture, EGF-like spans 638–667 (CLPETCNRKGVCNNKHHCHCDYGWSPPFCL). Residues 686–706 (VIITVLSITVPVLSILICLLI) form a helical membrane-spanning segment. The Cytoplasmic portion of the chain corresponds to 707–729 (AGLYRIYCKIPSGPKETKASSPG).

Zn(2+) serves as cofactor. Post-translationally, has no obvious cleavage site for furin endopeptidase, suggesting that the proteolytic processing is regulated. Highly expressed in Leydig cells. Expressed also in cauda epididymidis, vas deferens, convoluted tubules, kidney and the parietal cells of stomach. Not detected on developing spermatocytes or mature sperm.

Its subcellular location is the membrane. Its function is as follows. May be involved in sperm maturation and/or fertilization. May also be involved in epithelia functions associated with establishing and maintaining gradients of ions or nutrients. The polypeptide is Disintegrin and metalloproteinase domain-containing protein 21 (Adam21) (Mus musculus (Mouse)).